The sequence spans 635 residues: MHGLLLAAGLLSLPLHVLAHPQPSTSTSLAGRAGAVDLNEFRVAHRSSYTSHDEMKKLPSIASFRQGTYLEVATELVKQTMPNMEFRLVDDHYVGDSGIGHVRFRQTMHGIDIDNSDFNVNVGKDGKILSHGNSFYTGPAPASNPMVKRDFIDPMQALNGVRKALNLPVKANGAHVENMSEHKVMFKGTSGALSDPTAKLCYMAKEDGSLALTWRVETDIGDNWLLSYMDAKESSKVHNVVDYVAHATFQVYKWGLADPTEGKRDILTNPWNLKTSPLTWLADGKTNFTATRGNNAIAQYNPDGGNDYENNYRPSPKNLKFEYPYSPDMNPPKTYIDASVTQLFYTSNVCHDLYYMLGFNEKAGNFQVNNRGQGGKGNDYVILNAQDGSGTNNANFATPPDGQPGRMRAYIWTRANPPRDASFEAGTIIHEYTHGLSNRLCGGPANSRCLNALESGGMGEGWGDFYATAVRLKPNDTRKTNYVKGGWVNNSPKGVRMYPYSTDMNVNPLVYTSNNKLNEVHAIGTVWCTMLYEVLWNLIDKHGKNDGPVPVFENGVPNDGKYLAMKLVMDGMAIQPCNPNFVQARDAILDADMNLTKGANKCEIWKGFAKRGLGVGAKFDPKNRTGSNQVPNECK.

The signal sequence occupies residues 1–19 (MHGLLLAAGLLSLPLHVLA). A propeptide spanning residues 20-246 (HPQPSTSTSL…VHNVVDYVAH (227 aa)) is cleaved from the precursor. Asn-287 carries an N-linked (GlcNAc...) asparagine glycan. His-430 is a Zn(2+) binding site. Glu-431 is a catalytic residue. His-434 contacts Zn(2+). Residues Asn-475, Asn-594, and Asn-623 are each glycosylated (N-linked (GlcNAc...) asparagine).

It belongs to the peptidase M36 family. Requires Zn(2+) as cofactor.

The protein localises to the secreted. Secreted metalloproteinase probably acting as a virulence factor. This is Extracellular metalloproteinase 1 (MEP1) from Trichophyton tonsurans (Scalp ringworm fungus).